We begin with the raw amino-acid sequence, 113 residues long: Putative pterin-4-alpha-carbinolamine dehydratase (113 aa).

This sequence belongs to the pterin-4-alpha-carbinolamine dehydratase family.

It carries out the reaction (4aS,6R)-4a-hydroxy-L-erythro-5,6,7,8-tetrahydrobiopterin = (6R)-L-erythro-6,7-dihydrobiopterin + H2O. This chain is Putative pterin-4-alpha-carbinolamine dehydratase, found in Bordetella bronchiseptica (strain ATCC BAA-588 / NCTC 13252 / RB50) (Alcaligenes bronchisepticus).